The primary structure comprises 243 residues: Peptidyl-tRNA hydrolase (243 aa).

Y14 is a tRNA binding site. H19 acts as the Proton acceptor in catalysis. Residues F64, N66, and N112 each contribute to the tRNA site. Positions 188-243 (GGKAEEEKPRKDNKTTEKKPAGQSHIHQARNHNQPKVLTTGPMADILKKMFGNKGE) are disordered. The span at 190–207 (KAEEEKPRKDNKTTEKKP) shows a compositional bias: basic and acidic residues.

The protein belongs to the PTH family. Monomer.

It is found in the cytoplasm. It catalyses the reaction an N-acyl-L-alpha-aminoacyl-tRNA + H2O = an N-acyl-L-amino acid + a tRNA + H(+). Functionally, hydrolyzes ribosome-free peptidyl-tRNAs (with 1 or more amino acids incorporated), which drop off the ribosome during protein synthesis, or as a result of ribosome stalling. In terms of biological role, catalyzes the release of premature peptidyl moieties from peptidyl-tRNA molecules trapped in stalled 50S ribosomal subunits, and thus maintains levels of free tRNAs and 50S ribosomes. This chain is Peptidyl-tRNA hydrolase, found in Rhizobium leguminosarum bv. trifolii (strain WSM2304).